The chain runs to 524 residues: Nif-specific regulatory protein (524 aa).

The interval 1–182 (MIHKSDSDTT…AQTIRLMILP (182 aa)) is a domain. The GAF domain occupies 35-176 (EASKTLQEVL…TVANLIAQTI (142 aa)). Residues 212-481 (MVGKSPAMRQ…DGWLDNSLDE (270 aa)) form the Sigma-54 factor interaction domain. Residues 240–247 (GESGTGKE) and 303–312 (ADGGTLFLDE) each bind ATP. Residues 482 to 524 (RQRLIAALEKAGWVQAKAARLLGMTPRQVAYRIQIMDITMPRL) form a C-terminal DNA-binding domain region. Residues 496–515 (QAKAARLLGMTPRQVAYRIQ) constitute a DNA-binding region (H-T-H motif).

In terms of assembly, interacts with sigma-54.

Functionally, required for activation of most nif operons, which are directly involved in nitrogen fixation. The polypeptide is Nif-specific regulatory protein (nifA) (Klebsiella pneumoniae).